A 610-amino-acid chain; its full sequence is Elongation factor 4 (610 aa).

In terms of domain architecture, tr-type G spans 13 to 195; sequence SHIRNFSIVA…AIVRKLPAPK (183 aa). GTP contacts are provided by residues 25–30 and 142–145; these read DHGKST and NKID.

It belongs to the TRAFAC class translation factor GTPase superfamily. Classic translation factor GTPase family. LepA subfamily.

Its subcellular location is the cell inner membrane. The enzyme catalyses GTP + H2O = GDP + phosphate + H(+). Functionally, required for accurate and efficient protein synthesis under certain stress conditions. May act as a fidelity factor of the translation reaction, by catalyzing a one-codon backward translocation of tRNAs on improperly translocated ribosomes. Back-translocation proceeds from a post-translocation (POST) complex to a pre-translocation (PRE) complex, thus giving elongation factor G a second chance to translocate the tRNAs correctly. Binds to ribosomes in a GTP-dependent manner. The chain is Elongation factor 4 from Rhizobium etli (strain CIAT 652).